A 243-amino-acid polypeptide reads, in one-letter code: Toxin CcTX-1 (243 aa).

Basic and acidic residues predominate over residues 1–25 (SSPEKKNDMSKPGRMRFDNKKEPRS). Positions 1–48 (SSPEKKNDMSKPGRMRFDNKKEPRSSAKNSGNGYGCVDVNAGREPLTG) are disordered.

Contains disulfide bonds. As to expression, nematocytes.

It is found in the secreted. It localises to the nematocyst. The protein resides in the target cell membrane. In terms of biological role, has potent hemolytic activity. Is lethal to crayfish. Causes cutaneous inflammation in humans. May act as a pore-forming toxin, disrupting normal transmembrane ion concentration gradients in susceptible cells. This Cyanea capillata (Lion's mane jellyfish) protein is Toxin CcTX-1.